The following is a 456-amino-acid chain: MISRIKSFKNALNYDKMNCIEIILRRNDLMSTSFENKATNRGVITFTISQDKIKPALDKAFNKIKKDLNAPGFRKGHMPRPVFNQKFGEEVLYEDALNIVLPEAYEAAVTELGLDVVAQPKIDVVSMEKGKEWTLSAEVVTKPEVKLGDYKNLVVEVDASKEVSDEDVDAKIERERQNLAELIIKDGEAAQGDTVVIDFVGSVDGVEFDGGKGDNFSLELGSGQFIPGFEDQLVGAKAGDEVEVNVTFPESYQAEDLAGKAAKFMTTIHEVKTKEVPELDDELAKDIDEDVDTLEDLKVKYRKELEAAQETAYDDAVEGAAIELAVANAEIVDLPEEMIHEEVNRSVNEFMGNMQRQGISPEMYFQLTGTTQEDLHNQYSAEADKRVKTNLVIEAIAKAEGFEATDSEIEQEINDLATEYNMPADQVRSLLSADMLKHDIVMKKAVEVITSTASVK.

Residues 192 to 277 form the PPIase FKBP-type domain; the sequence is GDTVVIDFVG…IHEVKTKEVP (86 aa).

Belongs to the FKBP-type PPIase family. Tig subfamily.

The protein resides in the cytoplasm. It catalyses the reaction [protein]-peptidylproline (omega=180) = [protein]-peptidylproline (omega=0). In terms of biological role, involved in protein export. Acts as a chaperone by maintaining the newly synthesized protein in an open conformation. Functions as a peptidyl-prolyl cis-trans isomerase. This is Trigger factor from Streptococcus pyogenes serotype M2 (strain MGAS10270).